The sequence spans 493 residues: MANYFNTLNLRQKLDQLGRCRFMDRNEFADGCNFLKGKKIVIVGCGAQGLNQGLNMRDSGLDISYALRAEAIAEKRASFTRATENGFKVGTYQELIPTADLVINLTPDKQHSKVVADVVPLMKQGSAFGYSHGFNIVEEGEQIRKDITVVMTAPKCPGTEVREEYKRGFGVPTLIAVHPENDPKGEGMAIAKAWASATGGDRAGVLESSFVAEVKSDLMGEQTILCGMLQAGSIVCYDKLVADGKDPAYASKLIQYGWETITEALKQGGITLMMDRLSNAAKIRAFELSEEIKVQLNDLYLKHMDDIISGEFSSTMMADWANGDVNLFKWREETGKTAFENSPKADGIKISEQEYFDNGVVMVAMVKAGVEMAFDAMVASGIYEESAYYESLHELPLIANTIARKRLYEMNVVISDTAEYGNYLFSHVATPILAEKLIPMLQKGDLGEPTPAAEIDNVYLRDINDAIRNHPVELIGQELRGYMTDMKRISSQG.

The region spanning 14–208 is the KARI N-terminal Rossmann domain; that stretch reads LDQLGRCRFM…GGDRAGVLES (195 aa). Residues 45–48, Arg68, Arg76, Ser78, and 108–110 each bind NADP(+); these read CGAQ and DKQ. Residue His132 is part of the active site. Gly158 lines the NADP(+) pocket. 2 consecutive KARI C-terminal knotted domains span residues 209 to 345 and 346 to 486; these read SFVA…SPKA and DGIK…MTDM. Mg(2+)-binding residues include Asp217, Glu221, Glu390, and Glu394. Substrate is bound at residue Ser415.

Belongs to the ketol-acid reductoisomerase family. Requires Mg(2+) as cofactor.

It catalyses the reaction (2R)-2,3-dihydroxy-3-methylbutanoate + NADP(+) = (2S)-2-acetolactate + NADPH + H(+). The enzyme catalyses (2R,3R)-2,3-dihydroxy-3-methylpentanoate + NADP(+) = (S)-2-ethyl-2-hydroxy-3-oxobutanoate + NADPH + H(+). The protein operates within amino-acid biosynthesis; L-isoleucine biosynthesis; L-isoleucine from 2-oxobutanoate: step 2/4. It participates in amino-acid biosynthesis; L-valine biosynthesis; L-valine from pyruvate: step 2/4. In terms of biological role, involved in the biosynthesis of branched-chain amino acids (BCAA). Catalyzes an alkyl-migration followed by a ketol-acid reduction of (S)-2-acetolactate (S2AL) to yield (R)-2,3-dihydroxy-isovalerate. In the isomerase reaction, S2AL is rearranged via a Mg-dependent methyl migration to produce 3-hydroxy-3-methyl-2-ketobutyrate (HMKB). In the reductase reaction, this 2-ketoacid undergoes a metal-dependent reduction by NADPH to yield (R)-2,3-dihydroxy-isovalerate. The chain is Ketol-acid reductoisomerase (NADP(+)) from Actinobacillus pleuropneumoniae serotype 3 (strain JL03).